We begin with the raw amino-acid sequence, 402 residues long: Speedy protein E5 (402 aa).

The segment at 1–89 is disordered; the sequence is MDRTETRFRK…EEPEKELAPE (89 aa). Polar residues predominate over residues 16–39; the sequence is EKITTSRQPQPQNEQSPQRSTSGY. Over residues 76-89 the composition is skewed to acidic residues; that stretch reads DESAEEPEKELAPE.

Belongs to the Speedy/Ringo family.

In Homo sapiens (Human), this protein is Speedy protein E5 (SPDYE5).